Here is a 375-residue protein sequence, read N- to C-terminus: 4,4'-diaponeurosporenoate glycosyltransferase (375 aa).

The next 4 membrane-spanning stretches (helical) occupy residues 3-23, 164-184, 277-297, and 330-350; these read WLSR…ALIF, FYEG…NVFS, IMTA…GLCL, and FSNL…KIFI.

Belongs to the glycosyltransferase 2 family. CrtQ subfamily.

Its subcellular location is the cell membrane. It participates in carotenoid biosynthesis; staphyloxanthin biosynthesis; staphyloxanthin from farnesyl diphosphate: step 4/5. Catalyzes the glycosylation of 4,4'-diaponeurosporenoate, i.e. the esterification of glucose at the C1'' position with the carboxyl group of 4,4'-diaponeurosporenic acid, to form glycosyl-4,4'-diaponeurosporenoate. This is a step in the biosynthesis of staphyloxanthin, an orange pigment present in most staphylococci strains. The polypeptide is 4,4'-diaponeurosporenoate glycosyltransferase (crtQ) (Staphylococcus aureus (strain Mu50 / ATCC 700699)).